The primary structure comprises 879 residues: Alanine--tRNA ligase (879 aa).

His-566, His-570, Cys-668, and His-672 together coordinate Zn(2+).

This sequence belongs to the class-II aminoacyl-tRNA synthetase family. It depends on Zn(2+) as a cofactor.

The protein resides in the cytoplasm. It carries out the reaction tRNA(Ala) + L-alanine + ATP = L-alanyl-tRNA(Ala) + AMP + diphosphate. Its function is as follows. Catalyzes the attachment of alanine to tRNA(Ala) in a two-step reaction: alanine is first activated by ATP to form Ala-AMP and then transferred to the acceptor end of tRNA(Ala). Also edits incorrectly charged Ser-tRNA(Ala) and Gly-tRNA(Ala) via its editing domain. This is Alanine--tRNA ligase from Listeria monocytogenes serotype 4b (strain F2365).